We begin with the raw amino-acid sequence, 320 residues long: Eukaryotic translation initiation factor 3 subunit G (320 aa).

The tract at residues 1–59 (MPTGDFDSKPSWADQVEEEGEDDKCVTSELLKGIPLATGDTSPEPELLPGAPLPPPKEV) is disordered. Residues S8 and S11 each carry the phosphoserine modification. Residues T38 and T41 each carry the phosphothreonine modification. Residues S42, S189, S223, and S264 each carry the phosphoserine modification. Positions 209 to 234 (KTGKYVPPSLRDGASRRGESMQPNRR) are disordered. Basic and acidic residues predominate over residues 221–234 (GASRRGESMQPNRR). An RRM domain is found at 239–317 (ATIRVTNLSE…LILNVEWAKP (79 aa)).

Component of the eukaryotic translation initiation factor 3 (eIF-3) complex, which is composed of 13 subunits: EIF3A, EIF3B, EIF3C, EIF3D, EIF3E, EIF3F, EIF3G, EIF3H, EIF3I, EIF3J, EIF3K, EIF3L and EIF3M. The eIF-3 complex appears to include 3 stable modules: module A is composed of EIF3A, EIF3B, EIF3G and EIF3I; module B is composed of EIF3F, EIF3H, and EIF3M; and module C is composed of EIF3C, EIF3D, EIF3E, EIF3K and EIF3L. EIF3C of module C binds EIF3B of module A and EIF3H of module B, thereby linking the three modules. EIF3J is a labile subunit that binds to the eIF-3 complex via EIF3B. The eIF-3 complex interacts with RPS6KB1 under conditions of nutrient depletion. Mitogenic stimulation leads to binding and activation of a complex composed of MTOR and RPTOR, leading to phosphorylation and release of RPS6KB1 and binding of EIF4B to eIF-3. Interacts (via C-terminus) with AIFM1 (via N-terminus). Interacts with DHX33; the interaction is independent of RNA. In terms of processing, phosphorylated. Phosphorylation is enhanced upon serum stimulation.

The protein localises to the cytoplasm. The protein resides in the nucleus. It localises to the perinuclear region. Functionally, RNA-binding component of the eukaryotic translation initiation factor 3 (eIF-3) complex, which is required for several steps in the initiation of protein synthesis. The eIF-3 complex associates with the 40S ribosome and facilitates the recruitment of eIF-1, eIF-1A, eIF-2:GTP:methionyl-tRNAi and eIF-5 to form the 43S pre-initiation complex (43S PIC). The eIF-3 complex stimulates mRNA recruitment to the 43S PIC and scanning of the mRNA for AUG recognition. The eIF-3 complex is also required for disassembly and recycling of post-termination ribosomal complexes and subsequently prevents premature joining of the 40S and 60S ribosomal subunits prior to initiation. The eIF-3 complex specifically targets and initiates translation of a subset of mRNAs involved in cell proliferation, including cell cycling, differentiation and apoptosis, and uses different modes of RNA stem-loop binding to exert either translational activation or repression. This subunit can bind 18S rRNA. (Microbial infection) In case of FCV infection, plays a role in the ribosomal termination-reinitiation event leading to the translation of VP2. The sequence is that of Eukaryotic translation initiation factor 3 subunit G from Homo sapiens (Human).